Consider the following 362-residue polypeptide: Peptide chain release factor 1 (362 aa).

N5-methylglutamine is present on Q240.

The protein belongs to the prokaryotic/mitochondrial release factor family. In terms of processing, methylated by PrmC. Methylation increases the termination efficiency of RF1.

It is found in the cytoplasm. Its function is as follows. Peptide chain release factor 1 directs the termination of translation in response to the peptide chain termination codons UAG and UAA. The polypeptide is Peptide chain release factor 1 (Bifidobacterium longum subsp. infantis (strain ATCC 15697 / DSM 20088 / JCM 1222 / NCTC 11817 / S12)).